Consider the following 288-residue polypeptide: UTP--glucose-1-phosphate uridylyltransferase (288 aa).

It belongs to the UDPGP type 2 family.

It carries out the reaction alpha-D-glucose 1-phosphate + UTP + H(+) = UDP-alpha-D-glucose + diphosphate. It participates in glycolipid metabolism; diglucosyl-diacylglycerol biosynthesis. Its function is as follows. Catalyzes the formation of UDP-glucose from glucose-1-phosphate and UTP. This is an intermediate step in the biosynthesis of diglucosyl-diacylglycerol (Glc2-DAG), i.e. the predominant glycolipid found in the S.aureus membrane, which is also used as a membrane anchor for lipoteichoic acid (LTA). This Staphylococcus aureus (strain bovine RF122 / ET3-1) protein is UTP--glucose-1-phosphate uridylyltransferase (gtaB).